A 1829-amino-acid polypeptide reads, in one-letter code: Iron-regulated protein FrpC (1829 aa).

Hemolysin-type calcium-binding repeat units follow at residues 869-886, 887-904, 1015-1032, 1033-1050, 1051-1068, 1069-1086, 1087-1104, 1215-1232, 1233-1250, 1251-1268, 1269-1286, 1287-1304, 1415-1432, 1433-1450, 1451-1468, 1469-1486, 1487-1504, 1615-1632, 1633-1650, 1651-1668, 1669-1686, and 1687-1704; these read FGHN…NDTL, IGGA…SDTY, NGGL…DDLL, NGDA…NDTL, DGGE…NDAL, NGGE…NDTL, and NGGE…NDAL. A disordered region spans residues 1671-1690; that stretch reads GEGNDHLNGEDGNDTLIGGA.

The protein belongs to the RTX prokaryotic toxin (TC 1.C.11) family.

Its subcellular location is the cell outer membrane. It is found in the secreted. May participate in the pathogenesis of meningococcal disease. In Neisseria meningitidis serogroup B (strain ATCC BAA-335 / MC58), this protein is Iron-regulated protein FrpC (frpC).